Reading from the N-terminus, the 163-residue chain is Probable chemoreceptor glutamine deamidase CheD (163 aa).

Belongs to the CheD family.

It carries out the reaction L-glutaminyl-[protein] + H2O = L-glutamyl-[protein] + NH4(+). Its function is as follows. Probably deamidates glutamine residues to glutamate on methyl-accepting chemotaxis receptors (MCPs), playing an important role in chemotaxis. The chain is Probable chemoreceptor glutamine deamidase CheD from Borreliella burgdorferi (strain ATCC 35210 / DSM 4680 / CIP 102532 / B31) (Borrelia burgdorferi).